We begin with the raw amino-acid sequence, 375 residues long: Phytanoyl-CoA hydroxylase-interacting protein-like (375 aa).

3 positions are modified to phosphoserine: serine 11, serine 12, and serine 15. Residue asparagine 22 is glycosylated (N-linked (GlcNAc...) asparagine). Serine 24 carries the phosphoserine modification. An N-linked (GlcNAc...) asparagine glycan is attached at asparagine 36. The Fibronectin type-III domain occupies 51–160 (VPHNIKINNI…EIIEFCTADY (110 aa)).

The protein belongs to the PHYHIP family.

Its function is as follows. May play a role in the development of the central system. The polypeptide is Phytanoyl-CoA hydroxylase-interacting protein-like (Phyhipl) (Mus musculus (Mouse)).